A 445-amino-acid polypeptide reads, in one-letter code: Homoserine O-succinyltransferase (445 aa).

Positions 45-411 (NAVLICHALS…APHGHDSFLF (367 aa)) constitute an AB hydrolase-1 domain. The Nucleophile role is filled by S153. Residue R223 participates in substrate binding. Residues D373 and H406 contribute to the active site. Residue D407 participates in substrate binding.

The protein belongs to the AB hydrolase superfamily. MetX family. In terms of assembly, homodimer.

The protein localises to the cytoplasm. The enzyme catalyses L-homoserine + succinyl-CoA = O-succinyl-L-homoserine + CoA. It functions in the pathway amino-acid biosynthesis; L-methionine biosynthesis via de novo pathway; O-succinyl-L-homoserine from L-homoserine: step 1/1. Its function is as follows. Transfers a succinyl group from succinyl-CoA to L-homoserine, forming succinyl-L-homoserine. The chain is Homoserine O-succinyltransferase from Psychrobacter arcticus (strain DSM 17307 / VKM B-2377 / 273-4).